Consider the following 117-residue polypeptide: uncharacterized protein (117 aa).

Residues M1 to S21 traverse the membrane as a helical segment. Residues L38–K67 adopt a coiled-coil conformation.

The protein localises to the cell membrane. This is an uncharacterized protein from Bacillus subtilis (strain 168).